Here is a 163-residue protein sequence, read N- to C-terminus: uncharacterized protein (163 aa).

Residues 136 to 161 adopt a coiled-coil conformation; that stretch reads QKYIENHQKEINEHVEKLRTLHKELR.

This is an uncharacterized protein from Acanthamoeba polyphaga (Amoeba).